The primary structure comprises 548 residues: DNA ligase (548 aa).

Glu252 contributes to the ATP binding site. Residue Lys254 is the N6-AMP-lysine intermediate of the active site. ATP is bound by residues Arg259, Arg274, Glu303, Phe343, Arg414, and Lys420.

It belongs to the ATP-dependent DNA ligase family. Mg(2+) is required as a cofactor.

It carries out the reaction ATP + (deoxyribonucleotide)n-3'-hydroxyl + 5'-phospho-(deoxyribonucleotide)m = (deoxyribonucleotide)n+m + AMP + diphosphate.. Its function is as follows. DNA ligase that seals nicks in double-stranded DNA during DNA replication, DNA recombination and DNA repair. The sequence is that of DNA ligase from Natronomonas pharaonis (strain ATCC 35678 / DSM 2160 / CIP 103997 / JCM 8858 / NBRC 14720 / NCIMB 2260 / Gabara) (Halobacterium pharaonis).